Consider the following 356-residue polypeptide: sn-glycerol-3-phosphate import ATP-binding protein UgpC (356 aa).

One can recognise an ABC transporter domain in the interval 4–235 (LKLQAVTKSW…PASRFVASFI (232 aa)). An ATP-binding site is contributed by 37-44 (GPSGCGKS).

Belongs to the ABC transporter superfamily. sn-glycerol-3-phosphate importer (TC 3.A.1.1.3) family. As to quaternary structure, the complex is composed of two ATP-binding proteins (UgpC), two transmembrane proteins (UgpA and UgpE) and a solute-binding protein (UgpB).

It is found in the cell inner membrane. The catalysed reaction is sn-glycerol 3-phosphate(out) + ATP + H2O = sn-glycerol 3-phosphate(in) + ADP + phosphate + H(+). Its function is as follows. Part of the ABC transporter complex UgpBAEC involved in sn-glycerol-3-phosphate (G3P) import. Responsible for energy coupling to the transport system. The sequence is that of sn-glycerol-3-phosphate import ATP-binding protein UgpC from Salmonella typhi.